The primary structure comprises 288 residues: Bifunctional protein MdtA (288 aa).

Residues 129-132, 152-156, 195-198, and Lys-256 each bind NADP(+); these read TGPV, RKLDK, and TAGA.

Homotrimer.

Its subcellular location is the cytoplasm. The catalysed reaction is 5,10-methylenetetrahydromethanopterin + NADP(+) = 5,10-methenyl-5,6,7,8-tetrahydromethanopterin + NADPH. It catalyses the reaction (6R)-5,10-methylene-5,6,7,8-tetrahydrofolate + NADP(+) = (6R)-5,10-methenyltetrahydrofolate + NADPH. It functions in the pathway one-carbon metabolism; formaldehyde degradation; formate from formaldehyde (H(4)MPT route): step 2/5. In terms of biological role, catalyzes the dehydrogenation of methylene-H(4)MPT. Can also catalyze the reversible dehydrogenation of methylene-H(4)F with 20-fold lower catalytic efficiency. The sequence is that of Bifunctional protein MdtA from Methylorubrum extorquens (strain ATCC 14718 / DSM 1338 / JCM 2805 / NCIMB 9133 / AM1) (Methylobacterium extorquens).